We begin with the raw amino-acid sequence, 123 residues long: Small ribosomal subunit protein uS12 (123 aa).

Aspartate 89 carries the 3-methylthioaspartic acid modification.

This sequence belongs to the universal ribosomal protein uS12 family. In terms of assembly, part of the 30S ribosomal subunit. Contacts proteins S8 and S17. May interact with IF1 in the 30S initiation complex.

In terms of biological role, with S4 and S5 plays an important role in translational accuracy. Functionally, interacts with and stabilizes bases of the 16S rRNA that are involved in tRNA selection in the A site and with the mRNA backbone. Located at the interface of the 30S and 50S subunits, it traverses the body of the 30S subunit contacting proteins on the other side and probably holding the rRNA structure together. The combined cluster of proteins S8, S12 and S17 appears to hold together the shoulder and platform of the 30S subunit. The sequence is that of Small ribosomal subunit protein uS12 from Syntrophobacter fumaroxidans (strain DSM 10017 / MPOB).